A 238-amino-acid chain; its full sequence is Ribonuclease PH (238 aa).

Residues arginine 86 and 124–126 (GTR) each bind phosphate.

This sequence belongs to the RNase PH family. In terms of assembly, homohexameric ring arranged as a trimer of dimers.

It catalyses the reaction tRNA(n+1) + phosphate = tRNA(n) + a ribonucleoside 5'-diphosphate. Functionally, phosphorolytic 3'-5' exoribonuclease that plays an important role in tRNA 3'-end maturation. Removes nucleotide residues following the 3'-CCA terminus of tRNAs; can also add nucleotides to the ends of RNA molecules by using nucleoside diphosphates as substrates, but this may not be physiologically important. Probably plays a role in initiation of 16S rRNA degradation (leading to ribosome degradation) during starvation. This chain is Ribonuclease PH, found in Halorhodospira halophila (strain DSM 244 / SL1) (Ectothiorhodospira halophila (strain DSM 244 / SL1)).